The following is a 993-amino-acid chain: ATP-dependent DNA helicase MPH1 (993 aa).

The region spanning 94 to 261 is the Helicase ATP-binding domain; sequence IVHKSLFQNT…EVVNNLDISK (168 aa). 107–114 contributes to the ATP binding site; it reads IPTGMGKT. The DEAH box motif lies at 209-212; the sequence is DEAH. The 149-residue stretch at 507-655 folds into the Helicase C-terminal domain; the sequence is KVERLHRQEQ…CIDYKKSDRI (149 aa). The tract at residues 530–551 is disordered; it reads NDKLERSARRTGSSEEAQISGM. Residues 539-551 are compositionally biased toward polar residues; sequence RTGSSEEAQISGM. Positions 751 to 810 are FKH1-binding region; sequence LVTSNENPSKKRKIFKALDNLENDSTEEASSSLETEDEEVSDDNNVFIAEGQNGCQKDLE. Phosphothreonine is present on residues threonine 776 and threonine 785.

It belongs to the DEAD box helicase family. DEAH subfamily. FANCM sub-subfamily. Interacts with the MHF histone-fold complex composed of MHF1 and MHF2 to form the FANCM-MHF complex. Interacts with FHK1. Post-translationally, phosphorylation at both Thr-776 and Thr-785 is required for the interaction with FKH1.

It is found in the nucleus. It catalyses the reaction ATP + H2O = ADP + phosphate + H(+). In terms of biological role, ATP-dependent DNA helicase involved in DNA damage repair by homologous recombination and in genome maintenance. Capable of unwinding D-loops. Plays a role in limiting crossover recombinants during mitotic DNA double-strand break (DSB) repair. Prevents crossovers between ectopic sequences by removing substrates for MUS81-MMS4 or RAD1-RAD10 cleavage. Component of a FANCM-MHF complex which promotes gene conversion at blocked replication forks, probably by reversal of the stalled fork. Binds to flap-structured DNA but not to non-flap nicked DNA, and participates in Okazaki fragment processing by stimulating the endonuclease activities of FEN1 and DNA2. Involved in recombination donor preference during mating-type switching via interaction with FKH1. The chain is ATP-dependent DNA helicase MPH1 from Saccharomyces cerevisiae (strain ATCC 204508 / S288c) (Baker's yeast).